The chain runs to 94 residues: uncharacterized protein (94 aa).

In terms of tissue distribution, specifically expressed in retina and retinal pigment epithelium.

This is an uncharacterized protein from Homo sapiens (Human).